Reading from the N-terminus, the 124-residue chain is Large ribosomal subunit protein bL12 (124 aa).

This sequence belongs to the bacterial ribosomal protein bL12 family. In terms of assembly, homodimer. Part of the ribosomal stalk of the 50S ribosomal subunit. Forms a multimeric L10(L12)X complex, where L10 forms an elongated spine to which 2 to 4 L12 dimers bind in a sequential fashion. Binds GTP-bound translation factors.

Forms part of the ribosomal stalk which helps the ribosome interact with GTP-bound translation factors. Is thus essential for accurate translation. The polypeptide is Large ribosomal subunit protein bL12 (Cupriavidus metallidurans (strain ATCC 43123 / DSM 2839 / NBRC 102507 / CH34) (Ralstonia metallidurans)).